Consider the following 275-residue polypeptide: Dermonecrotic toxin SpaSicTox-betaIIA2 (275 aa).

The active site involves H5. Residues E25 and D27 each contribute to the Mg(2+) site. The Nucleophile role is filled by H41. Intrachain disulfides connect C45/C51 and C47/C190. D85 contacts Mg(2+).

It belongs to the arthropod phospholipase D family. Class II subfamily. Requires Mg(2+) as cofactor. As to expression, expressed by the venom gland.

It is found in the secreted. The enzyme catalyses an N-(acyl)-sphingosylphosphocholine = an N-(acyl)-sphingosyl-1,3-cyclic phosphate + choline. It catalyses the reaction an N-(acyl)-sphingosylphosphoethanolamine = an N-(acyl)-sphingosyl-1,3-cyclic phosphate + ethanolamine. It carries out the reaction a 1-acyl-sn-glycero-3-phosphocholine = a 1-acyl-sn-glycero-2,3-cyclic phosphate + choline. The catalysed reaction is a 1-acyl-sn-glycero-3-phosphoethanolamine = a 1-acyl-sn-glycero-2,3-cyclic phosphate + ethanolamine. In terms of biological role, dermonecrotic toxins cleave the phosphodiester linkage between the phosphate and headgroup of certain phospholipids (sphingolipid and lysolipid substrates), forming an alcohol (often choline) and a cyclic phosphate. This toxin acts on sphingomyelin (SM). It may also act on ceramide phosphoethanolamine (CPE), lysophosphatidylcholine (LPC) and lysophosphatidylethanolamine (LPE), but not on lysophosphatidylserine (LPS), and lysophosphatidylglycerol (LPG). It acts by transphosphatidylation, releasing exclusively cyclic phosphate products as second products. Induces dermonecrosis, hemolysis, increased vascular permeability, edema, inflammatory response, and platelet aggregation. The chain is Dermonecrotic toxin SpaSicTox-betaIIA2 from Sicarius patagonicus (Six-eyed sand spider).